The primary structure comprises 221 residues: Serine/arginine-rich splicing factor 2 (221 aa).

S2 carries the N-acetylserine modification. A Phosphoserine modification is found at S2. The region spanning 14–92 is the RRM domain; the sequence is TSLKVDNLTY…RELRVQMARY (79 aa). 2 positions are modified to phosphothreonine: T22 and T25. A Phosphoserine modification is found at S26. At K52 the chain carries N6-acetyllysine. The segment at 92-221 is disordered; it reads YGRPPDSHHS…SPEEEGAVSS (130 aa). 2 stretches are compositionally biased toward basic residues: residues 117 to 171 and 179 to 189; these read RRSR…RSKS and SRSRSRSRSRS. Residues S189, S191, S204, S206, S208, S212, and S220 each carry the phosphoserine modification. The span at 212 to 221 shows a compositional bias: acidic residues; that stretch reads SPEEEGAVSS.

Belongs to the splicing factor SR family. In terms of assembly, in vitro, self-associates and binds SRSF1/SFRS1 (ASF/SF2), SNRP70 and U2AF1 but not U2AF2. Binds SREK1/SFRS12. Interacts with CCNL1 and CCNL2. Interacts with SCAF11. Interacts with ZRSR2/U2AF1-RS2. Interacts with CCDC55 (via C-terminus). Interacts with BRDT. In terms of processing, extensively phosphorylated on serine residues in the RS domain. Phosphorylated by SRPK2 and this causes its redistribution from the nuclear speckle to nucleoplasm and controls cell fate decision in response to cisplatin treatment. KAT5/TIP60 inhibits its phosphorylation by preventing SRPK2 nuclear translocation. Acetylation on Lys-52 by KAT5/TIP60 promotes its proteasomal degradation. This effect is counterbalanced by HDAC6, which positively controls SRSF2 protein level by deacetylating it and preventing its proteasomal degradation.

The protein localises to the nucleus. The protein resides in the nucleoplasm. It localises to the nucleus speckle. Necessary for the splicing of pre-mRNA. It is required for formation of the earliest ATP-dependent splicing complex and interacts with spliceosomal components bound to both the 5'- and 3'-splice sites during spliceosome assembly. It also is required for ATP-dependent interactions of both U1 and U2 snRNPs with pre-mRNA. Interacts with other spliceosomal components, via the RS domains, to form a bridge between the 5'- and 3'-splice site binding components, U1 snRNP and U2AF. Binds to purine-rich RNA sequences, either 5'-AGSAGAGTA-3' (S=C or G) or 5'-GTTCGAGTA-3'. Can bind to beta-globin mRNA and commit it to the splicing pathway. The phosphorylated form (by SRPK2) is required for cellular apoptosis in response to cisplatin treatment. This is Serine/arginine-rich splicing factor 2 (SRSF2) from Pan troglodytes (Chimpanzee).